The chain runs to 73 residues: Alpha-bungarotoxin N3 (73 aa).

5 disulfide bridges follow: C3-C23, C16-C43, C28-C32, C47-C58, and C59-C64.

It belongs to the three-finger toxin family. Long-chain subfamily. Type II alpha-neurotoxin sub-subfamily. In terms of assembly, monomer in solution, homodimer in crystal state. As to expression, expressed by the venom gland.

The protein localises to the secreted. Its function is as follows. Binds with high affinity to muscular (alpha-1/CHRNA1) and neuronal (alpha-7/CHRNA7) nicotinic acetylcholine receptor (nAChR) and inhibits acetylcholine from binding to the receptor, thereby impairing neuromuscular and neuronal transmission. Mice injected with this toxin develop flaccid paralysis followed by death. Irreversibly inhibits twitches in a concentration-dependent manner in rat phrenic nerve-hemidiaphragm and chick biventer cervicis muscle. This is Alpha-bungarotoxin N3 from Bungarus candidus (Malayan krait).